The primary structure comprises 525 residues: GMP synthase [glutamine-hydrolyzing] (525 aa).

The 199-residue stretch at 9-207 folds into the Glutamine amidotransferase type-1 domain; that stretch reads RILILDFGSQ…VRDICQCEAL (199 aa). Cys86 acts as the Nucleophile in catalysis. Residues His181 and Glu183 contribute to the active site. The 193-residue stretch at 208–400 folds into the GMPS ATP-PPase domain; the sequence is WTPAKIIDDA…LGLPYDMLYR (193 aa). Residue 235–241 participates in ATP binding; that stretch reads SGGVDSS.

As to quaternary structure, homodimer.

The enzyme catalyses XMP + L-glutamine + ATP + H2O = GMP + L-glutamate + AMP + diphosphate + 2 H(+). Its pathway is purine metabolism; GMP biosynthesis; GMP from XMP (L-Gln route): step 1/1. Its function is as follows. Catalyzes the synthesis of GMP from XMP. The sequence is that of GMP synthase [glutamine-hydrolyzing] from Citrobacter koseri (strain ATCC BAA-895 / CDC 4225-83 / SGSC4696).